Here is a 211-residue protein sequence, read N- to C-terminus: Large ribosomal subunit protein uL3 (211 aa).

The interval 134 to 155 (ATHGNSLSHRAPGSIGQNQTPG) is disordered. At Gln152 the chain carries N5-methylglutamine.

This sequence belongs to the universal ribosomal protein uL3 family. As to quaternary structure, part of the 50S ribosomal subunit. Forms a cluster with proteins L14 and L19. Post-translationally, methylated by PrmB.

In terms of biological role, one of the primary rRNA binding proteins, it binds directly near the 3'-end of the 23S rRNA, where it nucleates assembly of the 50S subunit. In Methylococcus capsulatus (strain ATCC 33009 / NCIMB 11132 / Bath), this protein is Large ribosomal subunit protein uL3.